A 339-amino-acid chain; its full sequence is Ketol-acid reductoisomerase (NADP(+)) (339 aa).

Residues 1 to 182 (MRVYYDRDAD…GGGRSGIIET (182 aa)) form the KARI N-terminal Rossmann domain. Residues 24 to 27 (YGSQ), Lys48, Ser51, Thr53, and 83 to 86 (DELQ) each bind NADP(+). His108 is an active-site residue. Residue Gly134 participates in NADP(+) binding. The KARI C-terminal knotted domain maps to 183-328 (TFQEECETDL…AKLRGMMPWI (146 aa)). 4 residues coordinate Mg(2+): Asp191, Glu195, Glu227, and Glu231. Ser252 contributes to the substrate binding site.

Belongs to the ketol-acid reductoisomerase family. Requires Mg(2+) as cofactor.

It carries out the reaction (2R)-2,3-dihydroxy-3-methylbutanoate + NADP(+) = (2S)-2-acetolactate + NADPH + H(+). The enzyme catalyses (2R,3R)-2,3-dihydroxy-3-methylpentanoate + NADP(+) = (S)-2-ethyl-2-hydroxy-3-oxobutanoate + NADPH + H(+). Its pathway is amino-acid biosynthesis; L-isoleucine biosynthesis; L-isoleucine from 2-oxobutanoate: step 2/4. It functions in the pathway amino-acid biosynthesis; L-valine biosynthesis; L-valine from pyruvate: step 2/4. Its function is as follows. Involved in the biosynthesis of branched-chain amino acids (BCAA). Catalyzes an alkyl-migration followed by a ketol-acid reduction of (S)-2-acetolactate (S2AL) to yield (R)-2,3-dihydroxy-isovalerate. In the isomerase reaction, S2AL is rearranged via a Mg-dependent methyl migration to produce 3-hydroxy-3-methyl-2-ketobutyrate (HMKB). In the reductase reaction, this 2-ketoacid undergoes a metal-dependent reduction by NADPH to yield (R)-2,3-dihydroxy-isovalerate. The polypeptide is Ketol-acid reductoisomerase (NADP(+)) (Allorhizobium ampelinum (strain ATCC BAA-846 / DSM 112012 / S4) (Agrobacterium vitis (strain S4))).